The primary structure comprises 134 residues: Rhoptry antigen protein (134 aa).

Disordered regions lie at residues 21–82 (MGPL…SNLK) and 96–134 (QLDKEKPKKKKSKRKKKRDSSSDRILLEESKTFTSENEL). Polar residues predominate over residues 29–38 (KSTSAASTSD). The segment covering 39–54 (ELSGSEGPSTESTSTG) has biased composition (low complexity). Basic and acidic residues predominate over residues 57-69 (GEDKTTDNTYKEM). Positions 102–113 (PKKKKSKRKKKR) are enriched in basic residues. The span at 114–126 (DSSSDRILLEESK) shows a compositional bias: basic and acidic residues.

The protein is Rhoptry antigen protein of Plasmodium falciparum.